The sequence spans 917 residues: Calcium-activated chloride channel regulator 1 (917 aa).

Residues 1–21 (MGSFRSSLFILVLHLLEGAQS) form the signal peptide. The segment at 46–199 (DERLIQNIKD…AIRGTNVLPQ (154 aa)) is metalloprotease domain. Residue H156 coordinates Zn(2+). E157 is a catalytic residue. Residues H160 and N167 each contribute to the Zn(2+) site. In terms of domain architecture, VWFA spans 306–475 (IVCLVLDKSG…NGLIDAFGAL (170 aa)). Residues N503, N772, N806, N812, N838, and N893 are each glycosylated (N-linked (GlcNAc...) asparagine).

Belongs to the CLCR family. Post-translationally, glycosylated. The translation product is autoproteolytically cleaved by the metalloprotease domain in the endoplasmic reticulum into a N-terminal and a C-terminal products that remain physically associated with each other. The cleavage is necessary for calcium-activated chloride channel (CaCC) activation activity. Expressed in ileum, trachea, and the major salivary glands. In ileum, expressed to the crypt and villus epithelia, whereas in trachea expressed in both surface epithelium and submucosal glands.

It is found in the secreted. The protein localises to the extracellular space. In terms of biological role, may be involved in mediating calcium-activated chloride conductance. May play critical roles in goblet cell metaplasia, mucus hypersecretion, cystic fibrosis and AHR. May be involved in the regulation of mucus production and/or secretion by goblet cells. Involved in the regulation of tissue inflammation in the innate immune response. May play a role as a tumor suppressor. Induces MUC5AC. Induces a cAMP-dependent chloride conductance possibly through effects on CFTR in colon carcinoma cells. In Sus scrofa (Pig), this protein is Calcium-activated chloride channel regulator 1 (CLCA1).